We begin with the raw amino-acid sequence, 545 residues long: Hydroxylamine reductase (545 aa).

The [4Fe-4S] cluster site is built by Cys-7, Cys-10, Cys-19, and Cys-25. Positions 241, 265, 309, 400, 428, 453, 488, and 490 each coordinate hybrid [4Fe-2O-2S] cluster. A Cysteine persulfide; in oxidized form modification is found at Cys-400.

It belongs to the HCP family. Monomer. Requires [4Fe-4S] cluster as cofactor. The cofactor is hybrid [4Fe-2O-2S] cluster.

The protein resides in the cytoplasm. The catalysed reaction is A + NH4(+) + H2O = hydroxylamine + AH2 + H(+). Catalyzes the reduction of hydroxylamine to form NH(3) and H(2)O. This Desulfovibrio desulfuricans (strain ATCC 27774 / DSM 6949 / MB) protein is Hydroxylamine reductase.